The following is a 122-amino-acid chain: Large ribosomal subunit protein uL14 (122 aa).

It belongs to the universal ribosomal protein uL14 family. As to quaternary structure, part of the 50S ribosomal subunit. Forms a cluster with proteins L3 and L19. In the 70S ribosome, L14 and L19 interact and together make contacts with the 16S rRNA in bridges B5 and B8.

In terms of biological role, binds to 23S rRNA. Forms part of two intersubunit bridges in the 70S ribosome. The chain is Large ribosomal subunit protein uL14 from Variovorax paradoxus (strain S110).